A 236-amino-acid chain; its full sequence is Proteasome subunit alpha (236 aa).

The protein belongs to the peptidase T1A family. As to quaternary structure, the 20S proteasome core is composed of 14 alpha and 14 beta subunits that assemble into four stacked heptameric rings, resulting in a barrel-shaped structure. The two inner rings, each composed of seven catalytic beta subunits, are sandwiched by two outer rings, each composed of seven alpha subunits. The catalytic chamber with the active sites is on the inside of the barrel. Has a gated structure, the ends of the cylinder being occluded by the N-termini of the alpha-subunits. Is capped by the proteasome-associated ATPase, ARC.

The protein resides in the cytoplasm. It participates in protein degradation; proteasomal Pup-dependent pathway. Its activity is regulated as follows. The formation of the proteasomal ATPase ARC-20S proteasome complex, likely via the docking of the C-termini of ARC into the intersubunit pockets in the alpha-rings, may trigger opening of the gate for substrate entry. Interconversion between the open-gate and close-gate conformations leads to a dynamic regulation of the 20S proteasome proteolysis activity. Functionally, component of the proteasome core, a large protease complex with broad specificity involved in protein degradation. The polypeptide is Proteasome subunit alpha (Jonesia denitrificans (strain ATCC 14870 / DSM 20603 / BCRC 15368 / CIP 55.134 / JCM 11481 / NBRC 15587 / NCTC 10816 / Prevot 55134) (Listeria denitrificans)).